A 215-amino-acid polypeptide reads, in one-letter code: Abscisic acid receptor PYL6 (215 aa).

The interval 54 to 209 is START-like; it reads HVVGPSQCFS…NLQSLAKLAE (156 aa). The cysteines at positions 61 and 190 are disulfide-linked. Abscisate-binding positions include Lys-90, 120-125, 147-153, and Glu-174; these read AAFSLE and RLMNYKS. The Gate loop motif lies at 116-120; the sequence is SGLPA. A Latch loop motif is present at residues 146-148; it reads HRL.

Belongs to the PYR/PYL/RCAR abscisic acid intracellular receptor family. In terms of assembly, monomer. Homodimer. Binds ABA on one subunit only. Interacts with HAB1, ABI1 and ABI2, and possibly with other PP2Cs. Binds to CARs protein in an ABA-independent manner, both at the plasma membrane and in the nucleus. Interacts directly with CAR1 and CAR4. Interacts with MYC2 in the nucleus. Interaction with MYC2 is increased in the presence of abscisic acid.

It is found in the cytoplasm. The protein localises to the nucleus. The protein resides in the cell membrane. Functionally, receptor for abscisic acid (ABA) required for ABA-mediated responses such as stomatal closure and germination inhibition. Inhibits the activity of group-A protein phosphatases type 2C (PP2Cs) in an ABA-independent manner but more efficiently when activated by ABA. Can be activated by both (-)-ABA and (+)-ABA. May link ABA and jasmonate signaling pathways by modifying MYC2 transcriptional activity, and regulation of JAZ6 and JAZ8 gene expression by MYC2. The chain is Abscisic acid receptor PYL6 (PYL6) from Arabidopsis thaliana (Mouse-ear cress).